Reading from the N-terminus, the 307-residue chain is Probable porphobilinogen deaminase (307 aa).

An S-(dipyrrolylmethanemethyl)cysteine modification is found at C240.

It belongs to the HMBS family. The cofactor is dipyrromethane.

It carries out the reaction 4 porphobilinogen + H2O = hydroxymethylbilane + 4 NH4(+). The protein operates within porphyrin-containing compound metabolism; protoporphyrin-IX biosynthesis; coproporphyrinogen-III from 5-aminolevulinate: step 2/4. Tetrapolymerization of the monopyrrole PBG into the hydroxymethylbilane pre-uroporphyrinogen in several discrete steps. The sequence is that of Probable porphobilinogen deaminase (hemC) from Aeropyrum pernix (strain ATCC 700893 / DSM 11879 / JCM 9820 / NBRC 100138 / K1).